The primary structure comprises 167 residues: Ureidoglycolate lyase (167 aa).

The protein belongs to the ureidoglycolate lyase family. In terms of assembly, homodimer. Requires Ni(2+) as cofactor.

It catalyses the reaction (S)-ureidoglycolate = urea + glyoxylate. It functions in the pathway nitrogen metabolism; (S)-allantoin degradation. Functionally, catalyzes the catabolism of the allantoin degradation intermediate (S)-ureidoglycolate, generating urea and glyoxylate. Involved in the utilization of allantoin as nitrogen source. The chain is Ureidoglycolate lyase from Pseudomonas entomophila (strain L48).